The chain runs to 172 residues: Adenine phosphoribosyltransferase (172 aa).

Belongs to the purine/pyrimidine phosphoribosyltransferase family. Homodimer.

It is found in the cytoplasm. It catalyses the reaction AMP + diphosphate = 5-phospho-alpha-D-ribose 1-diphosphate + adenine. The protein operates within purine metabolism; AMP biosynthesis via salvage pathway; AMP from adenine: step 1/1. In terms of biological role, catalyzes a salvage reaction resulting in the formation of AMP, that is energically less costly than de novo synthesis. This Clostridium botulinum (strain Eklund 17B / Type B) protein is Adenine phosphoribosyltransferase.